Reading from the N-terminus, the 902-residue chain is Probable polyribonucleotide nucleotidyltransferase 1, chloroplastic (902 aa).

The transit peptide at 1–66 (MLATPGALHH…RRRAAGARVR (66 aa)) directs the protein to the chloroplast. Low complexity predominate over residues 44–53 (VAASASTSRR). Residues 44–93 (VAASASTSRRGGARRRAAGARVRASVGEEAPPVVTEEASTSGGPTKFSTK) are disordered. Over residues 80–91 (EASTSGGPTKFS) the composition is skewed to polar residues. A KH domain is found at 693-753 (PLIHVMKVKP…SSLEKSKAII (61 aa)). Residues 763–832 (GEIYRNCEIK…DKGQLRLSSR (70 aa)) enclose the S1 motif domain. The tract at residues 833 to 902 (ALLPDANQES…ASQGSEMGTE (70 aa)) is disordered. Residues 839 to 850 (NQESSSKQQAGG) are compositionally biased toward polar residues. Residues 852 to 862 (TREKAPQKDNL) are compositionally biased toward basic and acidic residues. The span at 877 to 888 (EASTAENNATAS) shows a compositional bias: low complexity.

It belongs to the polyribonucleotide nucleotidyltransferase family.

The protein localises to the plastid. It is found in the chloroplast. The catalysed reaction is RNA(n+1) + phosphate = RNA(n) + a ribonucleoside 5'-diphosphate. Involved in the metabolism of all major classes of plastid RNAs. Required for efficient 3'-end processing of mRNAs and 3'-end maturation of rRNA transcripts, but is not sufficient to mediate their degradation. Mediates tRNA degradation. May function as a poly(A) mRNA 3'-5' degrading phosphorylase. The sequence is that of Probable polyribonucleotide nucleotidyltransferase 1, chloroplastic (PNP1) from Oryza sativa subsp. japonica (Rice).